Reading from the N-terminus, the 474-residue chain is MTDGGLQADAPHLGVVVSVRGSVVDVRFDTHLPPIHTVLHADEGRIIVEVLAQRDAHHVRAIALTPTQGLARGMPVVDTGGPLKAPVGKGILSRMFDVFGNTIDRLPAPPDIQWRSVHRAPPALARRSTRSEVFVTGIKVIDVLLPLERGGKAGLFGGAGVGKTVLLTEMIHNMVGHQEGISIFCGIGERCREGEELYRDMKDAGVLPSMVMVFGQMNEPPGSRFRVGHAALTMAEYFRDDEHRDVLLLIDNIFRFIQAGSEVSGLMGQMPSRLGYQPTMGTELSGLEERIANTDSGAITSIQAVYVPADDFTDPAAVHTFSHLSASIVLSRKRASEGLFPAIDPLQSSSKMATPGIVGERHYALAQEIRRTLAQYAQLKDIIAMLGLEQLSPQDRNVVGRARRLERFLTQPFFTTEQFTNLPGKLVSLEDALDGCERILRDEFKDCPESALYMIGKIDEARARKTEAIDVHES.

157–164 serves as a coordination point for ATP; the sequence is GGAGVGKT.

This sequence belongs to the ATPase alpha/beta chains family. As to quaternary structure, F-type ATPases have 2 components, CF(1) - the catalytic core - and CF(0) - the membrane proton channel. CF(1) has five subunits: alpha(3), beta(3), gamma(1), delta(1), epsilon(1). CF(0) has three main subunits: a(1), b(2) and c(9-12). The alpha and beta chains form an alternating ring which encloses part of the gamma chain. CF(1) is attached to CF(0) by a central stalk formed by the gamma and epsilon chains, while a peripheral stalk is formed by the delta and b chains.

It is found in the cell inner membrane. The enzyme catalyses ATP + H2O + 4 H(+)(in) = ADP + phosphate + 5 H(+)(out). Its function is as follows. Produces ATP from ADP in the presence of a proton gradient across the membrane. The catalytic sites are hosted primarily by the beta subunits. The protein is ATP synthase subunit beta 2 of Polaromonas naphthalenivorans (strain CJ2).